Reading from the N-terminus, the 560-residue chain is NAD-dependent malic enzyme (560 aa).

Residue Tyr100 is the Proton donor of the active site. Arg153 is an NAD(+) binding site. The Proton acceptor role is filled by Lys171. A divalent metal cation contacts are provided by Glu242, Asp243, and Asp266. Positions 266 and 413 each coordinate NAD(+).

Belongs to the malic enzymes family. Homotetramer. Mg(2+) is required as a cofactor. It depends on Mn(2+) as a cofactor.

The catalysed reaction is (S)-malate + NAD(+) = pyruvate + CO2 + NADH. It catalyses the reaction oxaloacetate + H(+) = pyruvate + CO2. This Psychrobacter cryohalolentis (strain ATCC BAA-1226 / DSM 17306 / VKM B-2378 / K5) protein is NAD-dependent malic enzyme.